Consider the following 427-residue polypeptide: Ribitol transporter (427 aa).

Residues 1 to 7 (MSVNNKQ) lie on the Cytoplasmic side of the membrane. A helical transmembrane segment spans residues 8–28 (WYGLPLNLIWGYVAIAVFMTG). Over 29–51 (DGFELAFLSHYIKALGFTPAQAS) the chain is Extracellular. Residues 52–72 (FAFTLYGLAAALSAWVSGVVA) form a helical membrane-spanning segment. Residues 73-79 (EIITPRK) are Cytoplasmic-facing. Residues 80–100 (AMLIGFVLWCVFHVLFLVFGL) traverse the membrane as a helical segment. At 101–107 (GRANYAL) the chain is on the extracellular side. The chain crosses the membrane as a helical span at residues 108 to 128 (ILLFYGIRGLAYPLFLYSFIV). Topologically, residues 129–141 (AIIHNVRSDSSSS) are cytoplasmic. Residues 142 to 162 (ALGWFWAVYSVGIGVFGSYIP) form a helical membrane-spanning segment. At 163-171 (SFTIPHIGE) the chain is on the extracellular side. The helical transmembrane segment at 172 to 192 (MGTLWLALLFCATGGIIALVS) threads the bilayer. The Cytoplasmic portion of the chain corresponds to 193–238 (MRHTETPRHMQNLTTREKFAELGRAATLLYTNRSILFSSIVRIINT). The helical transmembrane segment at 239–259 (LSLFGFAVIMPMMFVDELGFT) threads the bilayer. At 260 to 263 (TSEW) the chain is on the extracellular side. Residues 264–284 (LQVWAAFFFTTIFSNVFWGIV) traverse the membrane as a helical segment. Topologically, residues 285–295 (AEKMGWMKVIR) are cytoplasmic. The chain crosses the membrane as a helical span at residues 296–316 (WFGCIGMALSSLAFYYLPQHF). The Extracellular segment spans residues 317 to 323 (GHNFAMA). A helical membrane pass occupies residues 324–344 (LVPAIALGIFVAAFVPMAAVF). Residues 345-360 (PALEPNHKGAAISVYN) are Cytoplasmic-facing. The helical transmembrane segment at 361–381 (LSAGLSNFLAPAIAVVLLPYF) threads the bilayer. The Extracellular portion of the chain corresponds to 382–383 (ST). The helical transmembrane segment at 384 to 404 (IGVVIAYTALYILAFFLCPLI) threads the bilayer. Topologically, residues 405–427 (RVEQPGFTSDQHAKPFTANAAES) are cytoplasmic.

This sequence belongs to the major facilitator superfamily. Sugar transporter (TC 2.A.1.1) family. CsbX subfamily.

The protein localises to the cell membrane. The polypeptide is Ribitol transporter (rbtT) (Klebsiella pneumoniae).